The sequence spans 285 residues: Probable glucose uptake protein GlcU (285 aa).

Transmembrane regions (helical) follow at residues 4–21 (FLAILPAIFWGSIVLFNV), 26–48 (GPYSQTLGTTFGALIFSIVVYIF), 52–71 (VLTPTVIGVGIVSGLFWALG), 84–106 (VSRTMPISTGLQLVSTTLFGVIV), 110–132 (WSTIISVVLGVLALVCIIIGVIL), 153–175 (IIILLISTVGYLVYVVVIRLFNV), 180–197 (ALLPQAVGMVLGGILLTF), 210–227 (IIPGLIWAAGNMFLFISQ), 232–254 (VATSFSLSQMGIIISTLGGILIL), and 266–283 (IVVGIVFIIAAGIMLGIA).

Belongs to the GRP transporter (TC 2.A.7.5) family.

The protein localises to the cell membrane. Involved in the uptake of glucose. In Bacillus anthracis, this protein is Probable glucose uptake protein GlcU (glcU).